Here is a 199-residue protein sequence, read N- to C-terminus: uncharacterized protein (199 aa).

4 helical membrane passes run 40 to 60, 86 to 106, 117 to 137, and 166 to 186; these read LLICVFKFCSLFMFSKFFCFL, VLTGASSSFTTTAVVAATFPF, TSWPLFIMLMSSSALPLLTSS, and FLLAMSMFVDFFSHPCFALIL.

It is found in the membrane. This is an uncharacterized protein from Saccharomyces cerevisiae (strain ATCC 204508 / S288c) (Baker's yeast).